Here is a 951-residue protein sequence, read N- to C-terminus: Translation initiation factor IF-2 (951 aa).

2 disordered regions span residues 58–255 (AERK…AVVI) and 305–329 (DVSR…KSLS). Positions 101–170 (AEPQYAEPQQ…PQAQPAQPAA (70 aa)) are enriched in low complexity. Residues 171–216 (PVAPPAPSAQPSAPQPPAAQPRPPQPPMPSRPPPAGYRPAPPPGAR) show a composition bias toward pro residues. Residues 217–234 (PPMSAAPGAPAQPGAAGQ) show a composition bias toward low complexity. Residues 450-619 (IRPPVVTVMG…ALQSEVLELK (170 aa)) enclose the tr-type G domain. Positions 459–466 (GHVDHGKT) are G1. Residue 459–466 (GHVDHGKT) coordinates GTP. The segment at 484-488 (GITQH) is G2. A G3 region spans residues 505–508 (DTPG). Residues 505-509 (DTPGH) and 559-562 (NKVD) contribute to the GTP site. A G4 region spans residues 559–562 (NKVD). Residues 595-597 (SAR) form a G5 region.

This sequence belongs to the TRAFAC class translation factor GTPase superfamily. Classic translation factor GTPase family. IF-2 subfamily.

It is found in the cytoplasm. Its function is as follows. One of the essential components for the initiation of protein synthesis. Protects formylmethionyl-tRNA from spontaneous hydrolysis and promotes its binding to the 30S ribosomal subunits. Also involved in the hydrolysis of GTP during the formation of the 70S ribosomal complex. This chain is Translation initiation factor IF-2, found in Anaeromyxobacter dehalogenans (strain 2CP-1 / ATCC BAA-258).